Consider the following 500-residue polypeptide: Histidinol dehydrogenase homolog 1 (500 aa).

Residues 1 to 25 are disordered; that stretch reads MPPAGGIFHRPPTTRKSRRLTPRSA. Basic residues predominate over residues 12–21; that stretch reads PTTRKSRRLT. Zn(2+) contacts are provided by Gln-313 and His-316. Catalysis depends on proton acceptor residues Glu-381 and His-382. The Zn(2+) site is built by Asp-415 and His-475.

The protein belongs to the histidinol dehydrogenase family. Zn(2+) serves as cofactor.

The protein is Histidinol dehydrogenase homolog 1 of Mesorhizobium japonicum (strain LMG 29417 / CECT 9101 / MAFF 303099) (Mesorhizobium loti (strain MAFF 303099)).